We begin with the raw amino-acid sequence, 251 residues long: Ubiquinone/menaquinone biosynthesis C-methyltransferase UbiE (251 aa).

S-adenosyl-L-methionine is bound by residues threonine 74, aspartate 95, and 123-124; that span reads NA.

This sequence belongs to the class I-like SAM-binding methyltransferase superfamily. MenG/UbiE family.

The catalysed reaction is a 2-demethylmenaquinol + S-adenosyl-L-methionine = a menaquinol + S-adenosyl-L-homocysteine + H(+). It catalyses the reaction a 2-methoxy-6-(all-trans-polyprenyl)benzene-1,4-diol + S-adenosyl-L-methionine = a 5-methoxy-2-methyl-3-(all-trans-polyprenyl)benzene-1,4-diol + S-adenosyl-L-homocysteine + H(+). Its pathway is quinol/quinone metabolism; menaquinone biosynthesis; menaquinol from 1,4-dihydroxy-2-naphthoate: step 2/2. It participates in cofactor biosynthesis; ubiquinone biosynthesis. In terms of biological role, methyltransferase required for the conversion of demethylmenaquinol (DMKH2) to menaquinol (MKH2) and the conversion of 2-polyprenyl-6-methoxy-1,4-benzoquinol (DDMQH2) to 2-polyprenyl-3-methyl-6-methoxy-1,4-benzoquinol (DMQH2). The polypeptide is Ubiquinone/menaquinone biosynthesis C-methyltransferase UbiE (Shewanella woodyi (strain ATCC 51908 / MS32)).